A 199-amino-acid chain; its full sequence is Probable thymidylate kinase (199 aa).

Gly-9–Thr-16 contributes to the ATP binding site.

The protein belongs to the thymidylate kinase family.

The catalysed reaction is dTMP + ATP = dTDP + ADP. The sequence is that of Probable thymidylate kinase from Methanococcus maripaludis (strain C7 / ATCC BAA-1331).